Consider the following 357-residue polypeptide: MDSGLSTPQLPITNMNNEITTDWDKAMNLIMTCVSGHIHSRMFNIVMKLNICDILEDGPKSIKQVSDTIGMDENSCFRLLRYFVAHELFSEDKSNIGTFEKTSISTMFSSKGKLRPMGERYTHDLHYKMFESLPETFANGHSNATKSVGVNHFWELFDLHPQYKDLFNQTMKVYTEAAISNITQSKGIDFSQYDTVVDIGGNHGLLIGNLLEIYPTIKHGINFDLDVVINSSDQTLRYSHPRLTHIPGNFFESVPESDCYIMKFILHDWPTQDCVKILKTISKSMKPNAKIHLFEIIIDPRKGYSKYETYIDILMFQMVNAKERTLDEWKELFELADFKLERVVDDIKTGCMVVSKK.

S-adenosyl-L-methionine contacts are provided by G200, D224, N249, F250, and K263. The active-site Proton acceptor is H267.

Belongs to the class I-like SAM-binding methyltransferase superfamily. Cation-independent O-methyltransferase family. COMT subfamily.

The enzyme catalyses (3,5-dichloro-2,4,6-trihydroxyphenyl)hexan-1-one + S-adenosyl-L-methionine = 1-(3,5-dichloro-2,6-dihydroxy-4-methoxyphenyl)hexan-1-one + S-adenosyl-L-homocysteine + H(+). This Dictyostelium discoideum (Social amoeba) protein is O-methyltransferase 9 (omt9).